Here is a 417-residue protein sequence, read N- to C-terminus: 26S proteasome regulatory subunit RPN14 (417 aa).

WD repeat units follow at residues Ala-134–Thr-173, Gly-176–Thr-215, Ile-242–Gln-281, Lys-285–Gly-325, Asn-330–Glu-371, and Ser-380–Asn-416.

It belongs to the WD repeat PAAF1/RPN14 family. As to quaternary structure, associates with the 19S proteasome regulatory particle (RP). Interacts directly with RPT5 and RPT6.

The protein localises to the cytoplasm. It localises to the nucleus. Acts as a regulatory subunit of the 26 proteasome which is involved in the ATP-dependent degradation of ubiquitinated proteins. Is not a genuine component of the 26S proteasome, but an auxiliary factor that interacts with the proteasomal ATPase of 19S regulatory particle (RP). Acts as a chaperone which regulates the highly structured assembly of the 19S regulatory particle. Involved in the substrate specificity of the 26S proteasome and is especially involved in the degradation of ubiquitinated GCN4. May contribute to the stability of the 26S proteasome in some stress conditions. The polypeptide is 26S proteasome regulatory subunit RPN14 (RPN14) (Saccharomyces cerevisiae (strain ATCC 204508 / S288c) (Baker's yeast)).